The chain runs to 230 residues: MTTNMLPLHPYWPRHLRLDNFVPNDLPTWHILVGLFSFSGVLIVITWLLSSRVSVVPLGTGRRLALCWFAVCTFIHLVIEGWFSFYHEILLEDQAFLSQLWKEYSKGDSRYILSDGFIVCMESVTACLWGPLSLWVVIAFLRHQPFRFVLQLVVSVGQIYGDVLYFLTELRDGFQHGELGHPLYFWFYFVIMNAIWLVIPGILVFDAIKHLTNAQSMLDNKVMKIKSKHN.

Thr2 carries the N-acetylthreonine modification. The next 4 helical transmembrane spans lie at 29–49 (WHIL…TWLL), 66–86 (LCWF…FSFY), 121–141 (MESV…IAFL), and 185–205 (FWFY…ILVF). In terms of domain architecture, EXPERA spans 61–204 (GRRLALCWFA…IWLVIPGILV (144 aa)).

This sequence belongs to the EBP family. Expressed in liver.

It is found in the endoplasmic reticulum membrane. The protein resides in the nucleus envelope. The protein localises to the cytoplasmic vesicle. It catalyses the reaction lathosterol = 5alpha-cholest-8-en-3beta-ol. The catalysed reaction is zymosterol = 5alpha-cholesta-7,24-dien-3beta-ol. The enzyme catalyses 5,6alpha-epoxy-5alpha-cholestan-3beta-ol + H2O = 5alpha-cholestane-3beta,5,6beta-triol. It carries out the reaction 5,6beta-epoxy-5beta-cholestan-3beta-ol + H2O = 5alpha-cholestane-3beta,5,6beta-triol. It functions in the pathway steroid biosynthesis; cholesterol biosynthesis. Enzymatic activity is induced by 25-hydroxycholesterol, cholestyramine and lovastatin. Functionally, isomerase that catalyzes the conversion of Delta(8)-sterols to their corresponding Delta(7)-isomers. Its function is as follows. Component of the microsomal antiestrogen binding site (AEBS), a multiproteic complex at the ER membrane that consists of an association between EBP and 7-dehydrocholesterol reductase/DHCR7. This complex is responsible for cholesterol-5,6-epoxide hydrolase (ChEH) activity, which consists in the hydration of cholesterol-5,6-epoxides (5,6-EC) into cholestane-3beta,5alpha,6beta-triol (CT). The precise role of each component of this complex has not been described yet. This Rattus norvegicus (Rat) protein is 3-beta-hydroxysteroid-Delta(8),Delta(7)-isomerase.